A 374-amino-acid polypeptide reads, in one-letter code: Ribosomal RNA large subunit methyltransferase G (374 aa).

The protein belongs to the methyltransferase superfamily. RlmG family.

The protein resides in the cytoplasm. It catalyses the reaction guanosine(1835) in 23S rRNA + S-adenosyl-L-methionine = N(2)-methylguanosine(1835) in 23S rRNA + S-adenosyl-L-homocysteine + H(+). Its function is as follows. Specifically methylates the guanine in position 1835 (m2G1835) of 23S rRNA. The chain is Ribosomal RNA large subunit methyltransferase G from Pseudomonas syringae pv. syringae (strain B728a).